The primary structure comprises 1193 residues: Nucleolar protein 6 (1193 aa).

2 disordered regions span residues 1 to 69 and 1137 to 1193; these read MRFV…TKNV and KREQ…KVLK. Composition is skewed to basic and acidic residues over residues 31 to 46 and 1151 to 1161; these read AGDH…KIAK and DANKAEEESKP. Ser35 bears the Phosphoserine mark. The span at 1162-1184 shows a compositional bias: basic residues; it reads KPKKHRQRKGTGKKALPKRKRLI.

This sequence belongs to the NRAP family. Part of the small subunit (SSU) processome, composed of more than 70 proteins and the RNA chaperone small nucleolar RNA (snoRNA) U3. In terms of tissue distribution, expressed in nurse cells at stages 9-10 of oogenesis and exported to the oocyte.

The protein localises to the nucleus. It localises to the nucleolus. Its subcellular location is the chromosome. In terms of biological role, part of the small subunit (SSU) processome, first precursor of the small eukaryotic ribosomal subunit. During the assembly of the SSU processome in the nucleolus, many ribosome biogenesis factors, an RNA chaperone and ribosomal proteins associate with the nascent pre-rRNA and work in concert to generate RNA folding, modifications, rearrangements and cleavage as well as targeted degradation of pre-ribosomal RNA by the RNA exosome. This Drosophila melanogaster (Fruit fly) protein is Nucleolar protein 6.